A 365-amino-acid chain; its full sequence is tRNA 2-selenouridine synthase (365 aa).

In terms of domain architecture, Rhodanese spans 15-138 (LVNDHPIMDA…MRQFLIETID (124 aa)). Cys98 functions as the S-selanylcysteine intermediate in the catalytic mechanism.

Belongs to the SelU family. In terms of assembly, monomer.

The enzyme catalyses 5-methylaminomethyl-2-thiouridine(34) in tRNA + selenophosphate + (2E)-geranyl diphosphate + H2O + H(+) = 5-methylaminomethyl-2-selenouridine(34) in tRNA + (2E)-thiogeraniol + phosphate + diphosphate. It carries out the reaction 5-methylaminomethyl-2-thiouridine(34) in tRNA + (2E)-geranyl diphosphate = 5-methylaminomethyl-S-(2E)-geranyl-thiouridine(34) in tRNA + diphosphate. It catalyses the reaction 5-methylaminomethyl-S-(2E)-geranyl-thiouridine(34) in tRNA + selenophosphate + H(+) = 5-methylaminomethyl-2-(Se-phospho)selenouridine(34) in tRNA + (2E)-thiogeraniol. The catalysed reaction is 5-methylaminomethyl-2-(Se-phospho)selenouridine(34) in tRNA + H2O = 5-methylaminomethyl-2-selenouridine(34) in tRNA + phosphate. Functionally, involved in the post-transcriptional modification of the uridine at the wobble position (U34) of tRNA(Lys), tRNA(Glu) and tRNA(Gln). Catalyzes the conversion of 2-thiouridine (S2U-RNA) to 2-selenouridine (Se2U-RNA). Acts in a two-step process involving geranylation of 2-thiouridine (S2U) to S-geranyl-2-thiouridine (geS2U) and subsequent selenation of the latter derivative to 2-selenouridine (Se2U) in the tRNA chain. The protein is tRNA 2-selenouridine synthase of Shewanella pealeana (strain ATCC 700345 / ANG-SQ1).